Here is a 140-residue protein sequence, read N- to C-terminus: MSIPQELYYTKDHEWLRKEGDEVVIGITRFAADQLGDVVFVELPQVEDTLQMGGTFGVVESVKAASDLFSPITGQVIATNPDLAEAPELVNEDPYGKGWMLRLKPEDPAQMDALLTAQAYTAWLETCSSFAVRFGQNLTL.

Positions 22–104 constitute a Lipoyl-binding domain; that stretch reads EVVIGITRFA…YGKGWMLRLK (83 aa). An N6-lipoyllysine modification is found at lysine 63.

Belongs to the GcvH family. In terms of assembly, the glycine cleavage system is composed of four proteins: P, T, L and H. (R)-lipoate serves as cofactor.

In terms of biological role, the glycine cleavage system catalyzes the degradation of glycine. The H protein shuttles the methylamine group of glycine from the P protein to the T protein. This chain is Glycine cleavage system H protein, found in Magnetococcus marinus (strain ATCC BAA-1437 / JCM 17883 / MC-1).